Consider the following 141-residue polypeptide: Meiotically up-regulated gene 118 protein (141 aa).

Residues 106-115 (LSSQKSARQP) are compositionally biased toward polar residues. A disordered region spans residues 106 to 141 (LSSQKSARQPTKTVASSSSSSSKSTTVSKSSSKSQV). Low complexity predominate over residues 116 to 141 (TKTVASSSSSSSKSTTVSKSSSKSQV).

It is found in the nucleus. In terms of biological role, has a role in meiosis. The chain is Meiotically up-regulated gene 118 protein (mug118) from Schizosaccharomyces pombe (strain 972 / ATCC 24843) (Fission yeast).